Here is a 205-residue protein sequence, read N- to C-terminus: MRPLTPRQAEILELIKCNIAETGMPPTRAEIAKRLGFKSANAAEEHLKALAKKGCIEIIPGTSRGIRLAQTEELEEQGLPLIGQVAAGEPILAQEHVEQHYQVDPNMFHPSADFLLRVRGDSMKDIGILEGDLLAVHKAEQARNGQVVVARVEDDVTVKRFEKKGSTVYLHAENEDYSPIVVDLTNQSLSIEGLAVGVIRNGDWQ.

The H-T-H motif DNA-binding region spans 28–48 (RAEIAKRLGFKSANAAEEHLK). Catalysis depends on for autocatalytic cleavage activity residues Ser122 and Lys159.

Belongs to the peptidase S24 family. Homodimer.

The catalysed reaction is Hydrolysis of Ala-|-Gly bond in repressor LexA.. Functionally, represses a number of genes involved in the response to DNA damage (SOS response), including recA and lexA. In the presence of single-stranded DNA, RecA interacts with LexA causing an autocatalytic cleavage which disrupts the DNA-binding part of LexA, leading to derepression of the SOS regulon and eventually DNA repair. This Shewanella woodyi (strain ATCC 51908 / MS32) protein is LexA repressor.